The following is a 208-amino-acid chain: Protein GrpE (208 aa).

The segment covering 1–25 (MVDNKDFNEELKESIQEELDNETKS) has biased composition (basic and acidic residues). Positions 1–38 (MVDNKDFNEELKESIQEELDNETKSENPNIDEEVEEVS) are disordered. Positions 29 to 38 (NIDEEVEEVS) are enriched in acidic residues.

It belongs to the GrpE family. As to quaternary structure, homodimer.

It is found in the cytoplasm. Functionally, participates actively in the response to hyperosmotic and heat shock by preventing the aggregation of stress-denatured proteins, in association with DnaK and GrpE. It is the nucleotide exchange factor for DnaK and may function as a thermosensor. Unfolded proteins bind initially to DnaJ; upon interaction with the DnaJ-bound protein, DnaK hydrolyzes its bound ATP, resulting in the formation of a stable complex. GrpE releases ADP from DnaK; ATP binding to DnaK triggers the release of the substrate protein, thus completing the reaction cycle. Several rounds of ATP-dependent interactions between DnaJ, DnaK and GrpE are required for fully efficient folding. The chain is Protein GrpE from Clostridium perfringens (strain SM101 / Type A).